Here is a 274-residue protein sequence, read N- to C-terminus: MEIRERILADMQVAETIDAHEEIRKSVEFLKAYLKKNTFLKSFVLGISGGQDSTLTGKLAQMAISELRAETGDDEYQFFAVSLPYGTQLDESDRQDALDFMAPDNRLTVNIKASVDASVAALAEAGVELSDFAKGNEKARERMKVQYAIAAMHKGVVVGTDHSAEAVTGFYTKYGDGGTDINPLFRLNKRQGKALLKELGCPEHLYLKKPTADLEDNKPALPDEVALGVTYDQIDDYLEGKEVPADAAAKIENWFIKTEHKRHMAITIFDDFWK.

Position 46-53 (46-53 (GISGGQDS)) interacts with ATP. D52 is a Mg(2+) binding site. R140 lines the deamido-NAD(+) pocket. T160 contacts ATP. E165 is a Mg(2+) binding site. Residues K173 and D180 each coordinate deamido-NAD(+). K189 and T211 together coordinate ATP. 260–261 (HK) serves as a coordination point for deamido-NAD(+).

It belongs to the NAD synthetase family. As to quaternary structure, homodimer.

The catalysed reaction is deamido-NAD(+) + NH4(+) + ATP = AMP + diphosphate + NAD(+) + H(+). Its pathway is cofactor biosynthesis; NAD(+) biosynthesis; NAD(+) from deamido-NAD(+) (ammonia route): step 1/1. Its function is as follows. Catalyzes the ATP-dependent amidation of deamido-NAD to form NAD. Uses ammonia as a nitrogen source. This Listeria innocua serovar 6a (strain ATCC BAA-680 / CLIP 11262) protein is NH(3)-dependent NAD(+) synthetase.